The primary structure comprises 428 residues: 3-phosphoshikimate 1-carboxyvinyltransferase (428 aa).

3-phosphoshikimate is bound by residues lysine 19, serine 20, and arginine 24. Lysine 19 is a binding site for phosphoenolpyruvate. Positions 91 and 119 each coordinate phosphoenolpyruvate. Serine 164, glutamine 166, aspartate 312, and lysine 339 together coordinate 3-phosphoshikimate. Glutamine 166 contributes to the phosphoenolpyruvate binding site. The Proton acceptor role is filled by aspartate 312. Residues arginine 343 and arginine 386 each coordinate phosphoenolpyruvate.

This sequence belongs to the EPSP synthase family. In terms of assembly, monomer.

It is found in the cytoplasm. It carries out the reaction 3-phosphoshikimate + phosphoenolpyruvate = 5-O-(1-carboxyvinyl)-3-phosphoshikimate + phosphate. It participates in metabolic intermediate biosynthesis; chorismate biosynthesis; chorismate from D-erythrose 4-phosphate and phosphoenolpyruvate: step 6/7. Catalyzes the transfer of the enolpyruvyl moiety of phosphoenolpyruvate (PEP) to the 5-hydroxyl of shikimate-3-phosphate (S3P) to produce enolpyruvyl shikimate-3-phosphate and inorganic phosphate. The sequence is that of 3-phosphoshikimate 1-carboxyvinyltransferase from Bacillus velezensis (strain DSM 23117 / BGSC 10A6 / LMG 26770 / FZB42) (Bacillus amyloliquefaciens subsp. plantarum).